The following is a 556-amino-acid chain: Serine beta-lactamase-like protein LACTB, mitochondrial (556 aa).

The N-terminal 117 residues, 1–117 (MYRLLSAVMA…RAIDSSRDLL (117 aa)), are a transit peptide targeting the mitochondrion. The active-site Acyl-ester intermediate is the Ser-166. A compositionally biased stretch (basic and acidic residues) spans 249-282 (ESDQEKELKEKGGKSNEKNDFAKAKVEQDNETKG). The disordered stretch occupies residues 249–290 (ESDQEKELKEKGGKSNEKNDFAKAKVEQDNETKGRNSKPCKK). Lys-290 and Lys-291 each carry N6-succinyllysine. N6-acetyllysine is present on residues Lys-304 and Lys-349.

The protein belongs to the peptidase S12 family.

The protein resides in the mitochondrion. Mitochondrial serine protease that acts as a regulator of mitochondrial lipid metabolism. Acts by decreasing protein levels of PISD, a mitochondrial enzyme that converts phosphatidylserine (PtdSer) to phosphatidylethanolamine (PtdEtn), thereby affecting mitochondrial lipid metabolism. It is unclear whether it acts directly by mediating proteolysis of PISD or by mediating proteolysis of another lipid metabolism protein. This is Serine beta-lactamase-like protein LACTB, mitochondrial from Bos taurus (Bovine).